Consider the following 341-residue polypeptide: Phosphate acyltransferase (341 aa).

This sequence belongs to the PlsX family. As to quaternary structure, homodimer. Probably interacts with PlsY.

The protein localises to the cytoplasm. The catalysed reaction is a fatty acyl-[ACP] + phosphate = an acyl phosphate + holo-[ACP]. It functions in the pathway lipid metabolism; phospholipid metabolism. In terms of biological role, catalyzes the reversible formation of acyl-phosphate (acyl-PO(4)) from acyl-[acyl-carrier-protein] (acyl-ACP). This enzyme utilizes acyl-ACP as fatty acyl donor, but not acyl-CoA. This chain is Phosphate acyltransferase, found in Photobacterium profundum (strain SS9).